A 433-amino-acid chain; its full sequence is tRNA-2-methylthio-N(6)-dimethylallyladenosine synthase (433 aa).

In terms of domain architecture, MTTase N-terminal spans 4–119 (KKLFIQTLGC…ITQAIKTPKF (116 aa)). Residues cysteine 13, cysteine 50, cysteine 82, cysteine 151, cysteine 155, and cysteine 158 each coordinate [4Fe-4S] cluster. The Radical SAM core domain occupies 137–370 (RNSIYKSYIN…QNRHSEILDE (234 aa)). The 61-residue stretch at 373 to 433 (KKQENKTFKV…KRMVLYGEIV (61 aa)) folds into the TRAM domain.

Belongs to the methylthiotransferase family. MiaB subfamily. In terms of assembly, monomer. [4Fe-4S] cluster is required as a cofactor.

The protein localises to the cytoplasm. It catalyses the reaction N(6)-dimethylallyladenosine(37) in tRNA + (sulfur carrier)-SH + AH2 + 2 S-adenosyl-L-methionine = 2-methylsulfanyl-N(6)-dimethylallyladenosine(37) in tRNA + (sulfur carrier)-H + 5'-deoxyadenosine + L-methionine + A + S-adenosyl-L-homocysteine + 2 H(+). Catalyzes the methylthiolation of N6-(dimethylallyl)adenosine (i(6)A), leading to the formation of 2-methylthio-N6-(dimethylallyl)adenosine (ms(2)i(6)A) at position 37 in tRNAs that read codons beginning with uridine. This chain is tRNA-2-methylthio-N(6)-dimethylallyladenosine synthase, found in Campylobacter jejuni (strain RM1221).